A 683-amino-acid chain; its full sequence is Long-chain-fatty-acid--CoA ligase 5 (683 aa).

A helical; Signal-anchor for type III membrane protein transmembrane segment spans residues 12–32 (LPTPALICLLTFGTAIFLWLI). Over 33–683 (NRPQPVLPLI…IKSLYESIEE (651 aa)) the chain is Cytoplasmic. At Lys361 the chain carries N6-acetyllysine.

It belongs to the ATP-dependent AMP-binding enzyme family.

The protein localises to the mitochondrion. Its subcellular location is the endoplasmic reticulum. It is found in the mitochondrion outer membrane. It localises to the endoplasmic reticulum membrane. The protein resides in the cell membrane. The enzyme catalyses a long-chain fatty acid + ATP + CoA = a long-chain fatty acyl-CoA + AMP + diphosphate. It catalyses the reaction (5Z,8Z,11Z,14Z)-eicosatetraenoate + ATP + CoA = (5Z,8Z,11Z,14Z)-eicosatetraenoyl-CoA + AMP + diphosphate. It carries out the reaction hexadecanoate + ATP + CoA = hexadecanoyl-CoA + AMP + diphosphate. The catalysed reaction is (E)-hexadec-2-enoate + ATP + CoA = (2E)-hexadecenoyl-CoA + AMP + diphosphate. The enzyme catalyses 15-hydroxy-(5Z,8Z,11Z,13E)-eicosatetraenoate + ATP + CoA = 15-hydroxy-(5Z,8Z,11Z,13E)-eicosatetraenoyl-CoA + AMP + diphosphate. It catalyses the reaction 12-hydroxy-(5Z,8Z,10E,14Z)-eicosatetraenoate + ATP + CoA = 12-hydroxy-(5Z,8Z,10E,14Z)-eicosatetraenoyl-CoA + AMP + diphosphate. It carries out the reaction 5-hydroxy-(6E,8Z,11Z,14Z)-eicosatetraenoate + ATP + CoA = 5-hydroxy-(6E,8Z,11Z,14Z)-eicosatetraenoyl-CoA + AMP + diphosphate. The catalysed reaction is 14,15-epoxy-(5Z,8Z,11Z)-eicosatrienoate + ATP + CoA = 14,15-epoxy-(5Z,8Z,11Z)-eicosatrienoyl-CoA + AMP + diphosphate. The enzyme catalyses 11,12-epoxy-(5Z,8Z,14Z)-eicosatrienoate + ATP + CoA = 11,12-epoxy-(5Z,8Z,14Z)-eicosatrienoyl-CoA + AMP + diphosphate. It catalyses the reaction (9Z)-octadecenoate + ATP + CoA = (9Z)-octadecenoyl-CoA + AMP + diphosphate. Catalyzes the conversion of long-chain fatty acids to their active form acyl-CoAs for both synthesis of cellular lipids, and degradation via beta-oxidation. ACSL5 may activate fatty acids from exogenous sources for the synthesis of triacylglycerol destined for intracellular storage. It was suggested that it may also stimulate fatty acid oxidation. At the villus tip of the crypt-villus axis of the small intestine may sensitize epithelial cells to apoptosis specifically triggered by the death ligand TRAIL. May have a role in the survival of glioma cells. Utilizes a wide range of saturated fatty acids with a preference for C16-C18 unsaturated fatty acids. This Mus musculus (Mouse) protein is Long-chain-fatty-acid--CoA ligase 5.